We begin with the raw amino-acid sequence, 372 residues long: N-methyl-L-tryptophan oxidase (372 aa).

4–34 (DLIIIGSGSVGAAAGYYATRAGLNVLMTDAH) is a binding site for FAD. Residue C308 is modified to S-8alpha-FAD cysteine.

It belongs to the MSOX/MTOX family. MTOX subfamily. Monomer. FAD serves as cofactor.

The enzyme catalyses N(alpha)-methyl-L-tryptophan + O2 + H2O = L-tryptophan + formaldehyde + H2O2. Catalyzes the oxidative demethylation of N-methyl-L-tryptophan. This is N-methyl-L-tryptophan oxidase from Shigella sonnei (strain Ss046).